The following is a 389-amino-acid chain: Flap endonuclease 1 (389 aa).

The segment at 1–105 (MGIKGLTALM…GELAKRKDKR (105 aa)) is N-domain. Asp-34 contacts Mg(2+). Residue Arg-71 participates in DNA binding. Asp-87, Glu-159, Glu-161, Asp-180, and Asp-182 together coordinate Mg(2+). The segment at 123-254 (EVEKLSKRTV…KTALKLIKEH (132 aa)) is I-domain. Glu-159 contacts DNA. DNA contacts are provided by Gly-232 and Asp-234. Asp-234 is a binding site for Mg(2+). The tract at residues 338–346 (SQNRLESFF) is interaction with PCNA. Residues 356-389 (IGKRKVEEKKGKNGKAGLANKKSKGVSGFRRSKN) are disordered.

This sequence belongs to the XPG/RAD2 endonuclease family. FEN1 subfamily. As to quaternary structure, interacts with PCNA. Three molecules of FEN1 bind to one PCNA trimer with each molecule binding to one PCNA monomer. PCNA stimulates the nuclease activity without altering cleavage specificity. Mg(2+) serves as cofactor. Phosphorylated. Phosphorylation upon DNA damage induces relocalization to the nuclear plasma.

Its subcellular location is the nucleus. The protein localises to the nucleolus. The protein resides in the nucleoplasm. It is found in the mitochondrion. Its function is as follows. Structure-specific nuclease with 5'-flap endonuclease and 5'-3' exonuclease activities involved in DNA replication and repair. During DNA replication, cleaves the 5'-overhanging flap structure that is generated by displacement synthesis when DNA polymerase encounters the 5'-end of a downstream Okazaki fragment. It enters the flap from the 5'-end and then tracks to cleave the flap base, leaving a nick for ligation. Also involved in the long patch base excision repair (LP-BER) pathway, by cleaving within the apurinic/apyrimidinic (AP) site-terminated flap. Acts as a genome stabilization factor that prevents flaps from equilibrating into structures that lead to duplications and deletions. Also possesses 5'-3' exonuclease activity on nicked or gapped double-stranded DNA, and exhibits RNase H activity. Also involved in replication and repair of rDNA and in repairing mitochondrial DNA. The chain is Flap endonuclease 1 from Ostreococcus lucimarinus (strain CCE9901).